Here is a 658-residue protein sequence, read N- to C-terminus: ATP-dependent RNA helicase DDX3Y (658 aa).

Over residues 1–10 (MSHVVVKNDP) the composition is skewed to basic and acidic residues. Positions 1–141 (MSHVVVKNDP…DDWSKPLPPS (141 aa)) are disordered. Serine 2 carries the post-translational modification N-acetylserine. The segment covering 15 to 34 (QLANLDLNSEKQSGGASTAS) has biased composition (polar residues). Residues 44–68 (RNREASKGFHDKDSSGWSCSKDKDA) show a composition bias toward basic and acidic residues. Lysine 55 bears the N6-acetyllysine mark. A phosphoserine mark is found at serine 81, serine 85, and serine 89. Residues 93-128 (GRFDDRGRSDYDGIGNRDRPGFGRFERSGHSRWCDK) are compositionally biased toward basic and acidic residues. Arginine 100 carries the post-translational modification Omega-N-methylarginine. Serine 101 bears the Phosphoserine mark. Residue tyrosine 103 is modified to Phosphotyrosine. Arginine 109 is modified (omega-N-methylarginine). Phosphoserine occurs at positions 129 and 181. The Q motif signature appears at 178-206 (ENFSDIDMGEIIMGNIELTRYTRPTPVQK). 198 to 205 (YTRPTPVQ) contributes to the ATP binding site. One can recognise a Helicase ATP-binding domain in the interval 209 to 401 (IPIIKGKRDL…RDFLDEYIFL (193 aa)). Lysine 213 participates in a covalent cross-link: Glycyl lysine isopeptide (Lys-Gly) (interchain with G-Cter in SUMO2). 222 to 229 (AQTGSGKT) serves as a coordination point for ATP. Residues 345-348 (DEAD) carry the DEAD box motif. One can recognise a Helicase C-terminal domain in the interval 412 to 573 (NITQKVVWVE…EVPSWLENMA (162 aa)). Serine 454 carries the post-translational modification Phosphoserine. The residue at position 588 (arginine 588) is an Omega-N-methylarginine. Serine 590 and serine 601 each carry phosphoserine. The disordered stretch occupies residues 597 to 625 (DYRQSSGSSSSGFGASRGSSSRSGGSGYG). Residues 601–619 (SSGSSSSGFGASRGSSSRS) show a composition bias toward low complexity. Residues arginine 613 and arginine 628 each carry the omega-N-methylarginine modification.

The protein belongs to the DEAD box helicase family. DDX3/DED1 subfamily. In terms of assembly, may interact with TDRD3.

It localises to the cytoplasm. Its subcellular location is the nucleus. The catalysed reaction is ATP + H2O = ADP + phosphate + H(+). Functionally, probable ATP-dependent RNA helicase. May play a role in spermatogenesis. The chain is ATP-dependent RNA helicase DDX3Y (DDX3Y) from Pongo abelii (Sumatran orangutan).